The chain runs to 151 residues: uncharacterized protein (151 aa).

A disordered region spans residues 1–48 (MRMAPTESTEGRRLWPGPREGGSGKETTSEKLSNLPRPHSYSPKRADA).

This is an uncharacterized protein from Homo sapiens (Human).